A 336-amino-acid polypeptide reads, in one-letter code: F420-dependent glucose-6-phosphate dehydrogenase (336 aa).

D39 contacts coenzyme F420-(gamma-Glu)n. H40 functions as the Proton donor in the catalytic mechanism. Coenzyme F420-(gamma-Glu)n-binding positions include T76 and T107 to G108. E109 serves as the catalytic Proton acceptor. Residues N112, G177–G178, and A180–V181 contribute to the coenzyme F420-(gamma-Glu)n site. Positions 195, 198, 259, and 283 each coordinate substrate.

Belongs to the F420-dependent glucose-6-phosphate dehydrogenase family. In terms of assembly, homodimer.

It carries out the reaction oxidized coenzyme F420-(gamma-L-Glu)(n) + D-glucose 6-phosphate + H(+) = 6-phospho-D-glucono-1,5-lactone + reduced coenzyme F420-(gamma-L-Glu)(n). Its function is as follows. Catalyzes the coenzyme F420-dependent oxidation of glucose 6-phosphate (G6P) to 6-phosphogluconolactone. Appears to have a role in resistance to oxidative stress, via its consumption of G6P that serves as a source of reducing power to combat oxidative stress in mycobacteria. In Mycobacterium avium (strain 104), this protein is F420-dependent glucose-6-phosphate dehydrogenase.